The sequence spans 277 residues: tRNA pseudouridine synthase A (277 aa).

Aspartate 57 (nucleophile) is an active-site residue. Tyrosine 115 serves as a coordination point for substrate.

Belongs to the tRNA pseudouridine synthase TruA family. In terms of assembly, homodimer.

The enzyme catalyses uridine(38/39/40) in tRNA = pseudouridine(38/39/40) in tRNA. Functionally, formation of pseudouridine at positions 38, 39 and 40 in the anticodon stem and loop of transfer RNAs. This chain is tRNA pseudouridine synthase A, found in Nitratidesulfovibrio vulgaris (strain DSM 19637 / Miyazaki F) (Desulfovibrio vulgaris).